A 677-amino-acid polypeptide reads, in one-letter code: UvrABC system protein B (677 aa).

Residues 24 to 412 (EGVLEGVPAQ…EGIVVEQVIR (389 aa)) form the Helicase ATP-binding domain. 37–44 (GVTGSGKT) is an ATP binding site. Positions 90 to 113 (YYDYYQPEAYLPSSDTYIEKDLAI) match the Beta-hairpin motif. The region spanning 429-591 (QIDDLMEEIQ…ITPQQIKKAR (163 aa)) is the Helicase C-terminal domain. Residues 635-670 (EKSMERTRKLMQEAAKKLEFIEAAQYRDELLKMEDL) form the UVR domain.

The protein belongs to the UvrB family. Forms a heterotetramer with UvrA during the search for lesions. Interacts with UvrC in an incision complex.

It localises to the cytoplasm. Its function is as follows. The UvrABC repair system catalyzes the recognition and processing of DNA lesions. A damage recognition complex composed of 2 UvrA and 2 UvrB subunits scans DNA for abnormalities. Upon binding of the UvrA(2)B(2) complex to a putative damaged site, the DNA wraps around one UvrB monomer. DNA wrap is dependent on ATP binding by UvrB and probably causes local melting of the DNA helix, facilitating insertion of UvrB beta-hairpin between the DNA strands. Then UvrB probes one DNA strand for the presence of a lesion. If a lesion is found the UvrA subunits dissociate and the UvrB-DNA preincision complex is formed. This complex is subsequently bound by UvrC and the second UvrB is released. If no lesion is found, the DNA wraps around the other UvrB subunit that will check the other stand for damage. The chain is UvrABC system protein B from Bacteroides fragilis (strain YCH46).